The sequence spans 470 residues: Uronate isomerase (470 aa).

Belongs to the metallo-dependent hydrolases superfamily. Uronate isomerase family.

It carries out the reaction D-glucuronate = D-fructuronate. It catalyses the reaction aldehydo-D-galacturonate = keto-D-tagaturonate. The protein operates within carbohydrate metabolism; pentose and glucuronate interconversion. This is Uronate isomerase from Cronobacter sakazakii (strain ATCC BAA-894) (Enterobacter sakazakii).